A 453-amino-acid chain; its full sequence is Protein IVY1 (453 aa).

The span at 1-16 shows a compositional bias: polar residues; it reads MPDNNTEQLQGSPSSD. The disordered stretch occupies residues 1–20; the sequence is MPDNNTEQLQGSPSSDQRLR. Serine 59, serine 84, and serine 85 each carry phosphoserine. Coiled-coil stretches lie at residues 102–122 and 230–257; these read KRDV…SNAY and IRNL…KHDF. 2 disordered regions span residues 316-340 and 353-453; these read DGPY…EETG and TSQP…SSNI. Serine 335 carries the post-translational modification Phosphoserine. Residues 353-371 show a composition bias toward low complexity; the sequence is TSQPSTSKTSLPKSKGSST. 2 stretches are compositionally biased toward polar residues: residues 372-384 and 404-429; these read VSTP…SSNK and LMGT…TFKQ. A compositionally biased stretch (basic and acidic residues) spans 431 to 442; the sequence is SIKEDNDNHSSD. Polar residues predominate over residues 443–453; sequence TDGMQDQSSNI.

As to quaternary structure, homomultimer. Interacts with YPT7 and VPS33.

The protein localises to the vacuole membrane. May be required for vacuolar fusion. Overexpression leads to fragmentation of vacuoles, missorting of the vacuolar enzyme carboxypeptidase Y (CPY) to the exterior of the cell and accumulation of multivesicular bodies inside the cell. This chain is Protein IVY1 (IVY1), found in Saccharomyces cerevisiae (strain ATCC 204508 / S288c) (Baker's yeast).